A 68-amino-acid chain; its full sequence is Beta-defensin 1 (68 aa).

Positions 1–21 (MRTSYLLLFTLCLLLSEMASG) are cleaved as a signal peptide. A propeptide spanning residues 22-32 (DNFLTGLGHRS) is cleaved from the precursor. Cystine bridges form between Cys-37/Cys-66, Cys-44/Cys-59, and Cys-49/Cys-67.

Belongs to the beta-defensin family. In terms of assembly, monomer. Homodimer.

The protein resides in the secreted. It localises to the membrane. Has bactericidal activity. May act as a ligand for C-C chemokine receptor CCR6. Positively regulates the sperm motility and bactericidal activity in a CCR6-dependent manner. Binds to CCR6 and triggers Ca2+ mobilization in the sperm which is important for its motility. The sequence is that of Beta-defensin 1 (DEFB1) from Allochrocebus preussi (Preuss's monkey).